A 238-amino-acid polypeptide reads, in one-letter code: Protein MIS12 homolog (238 aa).

Residues 117-149 adopt a coiled-coil conformation; that stretch reads ELDAELDSLRDKLNVVGKRSVELDSELQALERS.

This sequence belongs to the mis12 family.

It is found in the chromosome. Its subcellular location is the centromere. The protein resides in the kinetochore. Functionally, constitutive component of kinetochores that is essential for proper cell division during mitotic cell cycle. May play a role in the modulation of centromere during meiosis. The sequence is that of Protein MIS12 homolog from Arabidopsis thaliana (Mouse-ear cress).